We begin with the raw amino-acid sequence, 147 residues long: Deoxyuridine 5'-triphosphate nucleotidohydrolase (147 aa).

Substrate contacts are provided by residues 63 to 65, Asn-76, and 80 to 82; these read RSG and TID.

Belongs to the dUTPase family. Mg(2+) is required as a cofactor.

The catalysed reaction is dUTP + H2O = dUMP + diphosphate + H(+). Its pathway is pyrimidine metabolism; dUMP biosynthesis; dUMP from dCTP (dUTP route): step 2/2. This enzyme is involved in nucleotide metabolism: it produces dUMP, the immediate precursor of thymidine nucleotides and it decreases the intracellular concentration of dUTP so that uracil cannot be incorporated into DNA. The chain is Deoxyuridine 5'-triphosphate nucleotidohydrolase from Chlamydia felis (strain Fe/C-56) (Chlamydophila felis).